Here is a 199-residue protein sequence, read N- to C-terminus: LIM domain-containing protein E (199 aa).

The LIM zinc-binding domain maps to 5-65 (VKCGACAKTA…PVHTPKVSAT (61 aa)). The tract at residues 134–199 (YAVFGADGQP…EEEQQYEEEQ (66 aa)) is disordered. Low complexity-rich tracts occupy residues 146–155 (EQQEQQQYTE) and 163–174 (EEQQYQEEQQQY). Residues 175–199 (QEEEQQYQEEEQQYQEEEQQYEEEQ) show a composition bias toward acidic residues.

As to quaternary structure, may interact with rac1A.

Its subcellular location is the cytoplasm. The protein resides in the cell cortex. The protein localises to the nucleus. It localises to the cell projection. It is found in the lamellipodium. Its subcellular location is the filopodium. The protein resides in the cytoskeleton. Functionally, associates with the actin cytoskeleton and may regulate actin polymerization in lamellipodia, through a rac1-dependent signaling pathway. May play a role in cell motility. Involved in cytokinesis by regulating the microtubule system and linking it to the cortical actin network. This is LIM domain-containing protein E (limE) from Dictyostelium discoideum (Social amoeba).